The chain runs to 213 residues: Kynurenine formamidase (213 aa).

A substrate-binding site is contributed by Trp18. His48, His52, and Asp54 together coordinate Zn(2+). His58 (proton donor/acceptor) is an active-site residue. Zn(2+)-binding residues include His160 and Glu172.

It belongs to the Cyclase 1 superfamily. KynB family. Homodimer. Zn(2+) is required as a cofactor.

The enzyme catalyses N-formyl-L-kynurenine + H2O = L-kynurenine + formate + H(+). The protein operates within amino-acid degradation; L-tryptophan degradation via kynurenine pathway; L-kynurenine from L-tryptophan: step 2/2. Its function is as follows. Catalyzes the hydrolysis of N-formyl-L-kynurenine to L-kynurenine, the second step in the kynurenine pathway of tryptophan degradation. The protein is Kynurenine formamidase of Burkholderia lata (strain ATCC 17760 / DSM 23089 / LMG 22485 / NCIMB 9086 / R18194 / 383).